The chain runs to 692 residues: Elongation factor G (692 aa).

The tr-type G domain occupies 8–282 (EKTRNIGIMA…AVVEYMPAPT (275 aa)). Residues 17–24 (AHIDAGKT), 81–85 (DTPGH), and 135–138 (NKMD) contribute to the GTP site. Positions 285 to 304 (PNIKGVHPETGEADERHSSD) are disordered. Residues 290-304 (VHPETGEADERHSSD) show a composition bias toward basic and acidic residues.

The protein belongs to the TRAFAC class translation factor GTPase superfamily. Classic translation factor GTPase family. EF-G/EF-2 subfamily.

It localises to the cytoplasm. Functionally, catalyzes the GTP-dependent ribosomal translocation step during translation elongation. During this step, the ribosome changes from the pre-translocational (PRE) to the post-translocational (POST) state as the newly formed A-site-bound peptidyl-tRNA and P-site-bound deacylated tRNA move to the P and E sites, respectively. Catalyzes the coordinated movement of the two tRNA molecules, the mRNA and conformational changes in the ribosome. In Desulfitobacterium hafniense (strain Y51), this protein is Elongation factor G.